We begin with the raw amino-acid sequence, 220 residues long: Large ribosomal subunit protein uL3 (220 aa).

Belongs to the universal ribosomal protein uL3 family. As to quaternary structure, part of the 50S ribosomal subunit. Forms a cluster with proteins L14 and L19.

Functionally, one of the primary rRNA binding proteins, it binds directly near the 3'-end of the 23S rRNA, where it nucleates assembly of the 50S subunit. This is Large ribosomal subunit protein uL3 from Staphylococcus carnosus (strain TM300).